Consider the following 631-residue polypeptide: Golgin subfamily A member 8A (631 aa).

Over residues 1–20 the composition is skewed to basic and acidic residues; that stretch reads MLPVDGEERKSEGSDTEGDR. Disordered regions lie at residues 1–103, 127–154, 426–447, and 488–520; these read MLPV…QEQA, KKQVEHQLEEEKKANNEKQKAERELEGQ, TSAEKEPEAAVPASGTGGESSG, and PGDSAKDASPGGGHHQAGPGQGGEEGEAAGAAG. The segment covering 78-92 has biased composition (low complexity); that stretch reads SLYLSPKSSSASSSL. The segment covering 93-103 has biased composition (polar residues); it reads HARQSPCQEQA. Residues 110–468 are a coiled coil; the sequence is SIKISRLNDT…REHVEKLELG (359 aa). Positions 128-152 are enriched in basic and acidic residues; the sequence is KQVEHQLEEEKKANNEKQKAERELE. Positions 497–510 are enriched in gly residues; it reads PGGGHHQAGPGQGG. Positions 519–631 are golgi-targeting domain; sequence AGDGVAACGS…CWAWLPRRRR (113 aa).

The protein belongs to the GOLGA8 family.

The protein resides in the golgi apparatus. The protein localises to the golgi stack membrane. Its function is as follows. May be involved in maintaining Golgi structure. This is Golgin subfamily A member 8A (GOLGA8A) from Homo sapiens (Human).